Here is a 292-residue protein sequence, read N- to C-terminus: UPF0749 protein Mb1856 (292 aa).

A signal peptide spans 1 to 28; the sequence is MSENRPEPVAAETSAATTARHSQADAGA. The interval 1–30 is disordered; that stretch reads MSENRPEPVAAETSAATTARHSQADAGAHD. The next 3 helical transmembrane spans lie at 68-88, 152-172, and 229-249; these read VFGT…VTQV, AALS…MITI, and VLSP…AAAM.

This sequence belongs to the UPF0749 family.

It localises to the cell membrane. This chain is UPF0749 protein Mb1856, found in Mycobacterium bovis (strain ATCC BAA-935 / AF2122/97).